The chain runs to 37 residues: Large ribosomal subunit protein bL36A (37 aa).

This sequence belongs to the bacterial ribosomal protein bL36 family.

In Clavibacter sepedonicus (Clavibacter michiganensis subsp. sepedonicus), this protein is Large ribosomal subunit protein bL36A.